The sequence spans 557 residues: MLRSDAVTKGIQRSPNRAMLRAVGFGDADFGKPILGIANGYSTITPCNIGLDVLAKRAEEAARLAGGMPQMFGTITVSDGISMGTEGMKYSLVSREVIADAIETACNGQSMDGVLAVGGCDKNMPGAMLAMARMNIPSVFVYGGTIKPGKLGGCDLTVVSAFEAVGQITSGKIDEEQLTAVEKNACPGAGSCGGMFTANTMSAAIETMGLSLPYSSTMAAEDQEKADSAARSAEVLVDAVKANIRPLDLLTTEAFENAISVIMAVGGSTNAVLHLLAIARTAGVDLSIDDFERIRQRVPVICDLKPSGRFVTVDLHNAGGIPQVMKLLLDAGLLHGDCQTVEGKSLNELLADVPSEPPADQEVIRPLTNPMYSKGHLAILKGNLAIEGSVAKISGVKTPVLTGPARVFESEEDCLASILEKKINAGDVVVIRYEGPVGGPGMREMLAPTSAIVGQGLGDKVALITDGRFSGGTYGLVVGHVAPEAAVGGTIGLVQEGDSITVDANQLLLQLNVDETELAKRRAAWSKPKPRYTTGILGKYARLVSTSSKGAVTDQPD.

Cys47 provides a ligand contact to [2Fe-2S] cluster. Residue Asp79 coordinates Mg(2+). Position 120 (Cys120) interacts with [2Fe-2S] cluster. Mg(2+) contacts are provided by Asp121 and Lys122. Lys122 is subject to N6-carboxylysine. Cys192 contacts [2Fe-2S] cluster. Residue Glu444 coordinates Mg(2+). Ser470 acts as the Proton acceptor in catalysis.

Belongs to the IlvD/Edd family. In terms of assembly, homodimer. [2Fe-2S] cluster serves as cofactor. It depends on Mg(2+) as a cofactor.

The enzyme catalyses (2R)-2,3-dihydroxy-3-methylbutanoate = 3-methyl-2-oxobutanoate + H2O. It catalyses the reaction (2R,3R)-2,3-dihydroxy-3-methylpentanoate = (S)-3-methyl-2-oxopentanoate + H2O. Its pathway is amino-acid biosynthesis; L-isoleucine biosynthesis; L-isoleucine from 2-oxobutanoate: step 3/4. It functions in the pathway amino-acid biosynthesis; L-valine biosynthesis; L-valine from pyruvate: step 3/4. In terms of biological role, functions in the biosynthesis of branched-chain amino acids. Catalyzes the dehydration of (2R,3R)-2,3-dihydroxy-3-methylpentanoate (2,3-dihydroxy-3-methylvalerate) into 2-oxo-3-methylpentanoate (2-oxo-3-methylvalerate) and of (2R)-2,3-dihydroxy-3-methylbutanoate (2,3-dihydroxyisovalerate) into 2-oxo-3-methylbutanoate (2-oxoisovalerate), the penultimate precursor to L-isoleucine and L-valine, respectively. This Synechococcus sp. (strain CC9902) protein is Dihydroxy-acid dehydratase.